Consider the following 336-residue polypeptide: tRNA N6-adenosine threonylcarbamoyltransferase (336 aa).

Positions 112 and 116 each coordinate Fe cation. Residues 136–140, aspartate 169, glycine 182, and asparagine 276 contribute to the substrate site; that span reads LVSGG. Fe cation is bound at residue aspartate 304.

The protein belongs to the KAE1 / TsaD family. Fe(2+) serves as cofactor.

The protein localises to the cytoplasm. The catalysed reaction is L-threonylcarbamoyladenylate + adenosine(37) in tRNA = N(6)-L-threonylcarbamoyladenosine(37) in tRNA + AMP + H(+). In terms of biological role, required for the formation of a threonylcarbamoyl group on adenosine at position 37 (t(6)A37) in tRNAs that read codons beginning with adenine. Is involved in the transfer of the threonylcarbamoyl moiety of threonylcarbamoyl-AMP (TC-AMP) to the N6 group of A37, together with TsaE and TsaB. TsaD likely plays a direct catalytic role in this reaction. The protein is tRNA N6-adenosine threonylcarbamoyltransferase of Francisella philomiragia subsp. philomiragia (strain ATCC 25017 / CCUG 19701 / FSC 153 / O#319-036).